The primary structure comprises 620 residues: 1-deoxy-D-xylulose-5-phosphate synthase (620 aa).

Residues histidine 80 and 121-123 (GHS) contribute to the thiamine diphosphate site. A Mg(2+)-binding site is contributed by aspartate 152. Thiamine diphosphate contacts are provided by residues 153-154 (GA), asparagine 181, tyrosine 288, and glutamate 370. Asparagine 181 serves as a coordination point for Mg(2+).

The protein belongs to the transketolase family. DXPS subfamily. Homodimer. Mg(2+) serves as cofactor. The cofactor is thiamine diphosphate.

It carries out the reaction D-glyceraldehyde 3-phosphate + pyruvate + H(+) = 1-deoxy-D-xylulose 5-phosphate + CO2. Its pathway is metabolic intermediate biosynthesis; 1-deoxy-D-xylulose 5-phosphate biosynthesis; 1-deoxy-D-xylulose 5-phosphate from D-glyceraldehyde 3-phosphate and pyruvate: step 1/1. Its function is as follows. Catalyzes the acyloin condensation reaction between C atoms 2 and 3 of pyruvate and glyceraldehyde 3-phosphate to yield 1-deoxy-D-xylulose-5-phosphate (DXP). This Salmonella heidelberg (strain SL476) protein is 1-deoxy-D-xylulose-5-phosphate synthase.